The primary structure comprises 446 residues: Sulfoquinovose isomerase (446 aa).

This sequence belongs to the SqvD family.

The catalysed reaction is 6-sulfo-beta-D-quinovose = 6-deoxy-6-sulfo-D-fructose. Its function is as follows. Part of the sulfo-TAL (or sulfo-SFT) pathway, a D-sulfoquinovose degradation pathway that produces sulfolactate (SL). Catalyzes the isomerization of sulfoquinovose (SQ) to 6-deoxy-6-sulfo-D-fructose (SF). The chain is Sulfoquinovose isomerase from Priestia aryabhattai (Bacillus aryabhattai).